Consider the following 397-residue polypeptide: Tryptophan synthase beta chain (397 aa).

Lys-90 is modified (N6-(pyridoxal phosphate)lysine).

It belongs to the TrpB family. In terms of assembly, tetramer of two alpha and two beta chains. It depends on pyridoxal 5'-phosphate as a cofactor.

The enzyme catalyses (1S,2R)-1-C-(indol-3-yl)glycerol 3-phosphate + L-serine = D-glyceraldehyde 3-phosphate + L-tryptophan + H2O. The protein operates within amino-acid biosynthesis; L-tryptophan biosynthesis; L-tryptophan from chorismate: step 5/5. Functionally, the beta subunit is responsible for the synthesis of L-tryptophan from indole and L-serine. The polypeptide is Tryptophan synthase beta chain (Nitrosomonas europaea (strain ATCC 19718 / CIP 103999 / KCTC 2705 / NBRC 14298)).